Here is a 491-residue protein sequence, read N- to C-terminus: Delayed-rectifier potassium channel regulatory subunit KCNS3 (491 aa).

Topologically, residues 1-182 (MVFGEFFHRP…IRMENPAYCL (182 aa)) are cytoplasmic. A helical membrane pass occupies residues 183–204 (SAKLIAISSLSVVLASIVAMCV). Over 205–220 (HSMSEFQNEDGEVDDP) the chain is Extracellular. The helical transmembrane segment at 221–243 (VLEGVEIACIAWFTGELAIRLVA) threads the bilayer. Topologically, residues 244–254 (APSQKKFWKNP) are cytoplasmic. A helical transmembrane segment spans residues 255-275 (LNIIDFVSIIPFYATLAVDTK). Residues 276 to 285 (EEESEDIENM) lie on the Extracellular side of the membrane. Residues 286–306 (GKVVQILRLMRIFRILKLARH) traverse the membrane as a helical; Voltage-sensor segment. Topologically, residues 307–321 (SVGLRSLGATLRHSY) are cytoplasmic. Residues 322 to 343 (HEVGLLLLFLSVGISIFSVLIY) traverse the membrane as a helical segment. The Extracellular segment spans residues 344 to 357 (SVEKDEHKSSLTSI). The segment at residues 358-369 (PICWWWATISMT) is an intramembrane region (helical). A Selectivity filter motif is present at residues 370–375 (TVGYGD). An intramembrane segment occupies 370 to 377 (TVGYGDTH). Topologically, residues 378–384 (PVTLAGK) are extracellular. Residues 385 to 413 (IIASTCIICGILVVALPITIIFNKFSKYY) form a helical membrane-spanning segment. At 414-491 (QKQKDMEVDQ…TASLENCTGK (78 aa)) the chain is on the cytoplasmic side.

This sequence belongs to the potassium channel family. S (TC 1.A.1.2) subfamily. Kv9.3/KCNS3 sub-subfamily. In terms of assembly, heterotetramer with KCNB1. Does not form homomultimers.

It localises to the cell membrane. Potassium channel regulatory subunit that modulates the delayed rectifier potassium channel activity of KCNB1 by namely slowing down the deactivation and inactivation time constants. While it does not form functional channel on its own, it can form functional heterotetrameric channels with KCNB1. This chain is Delayed-rectifier potassium channel regulatory subunit KCNS3, found in Mus musculus (Mouse).